Reading from the N-terminus, the 417-residue chain is DNA primase DnaG (417 aa).

The Toprim domain maps to 171–257 (DAIIIVEGRA…SVEDMARKEI (87 aa)). Mg(2+)-binding residues include E177, D219, and D221. Positions 278-325 (VPGEKRTQDLRPQKPGASEQNSIKKENVENENESTPTSFEPISEPAPP) are disordered. A compositionally biased stretch (basic and acidic residues) spans 279–289 (PGEKRTQDLRP).

It belongs to the archaeal DnaG primase family. Forms a ternary complex with MCM helicase and DNA. It depends on Mg(2+) as a cofactor.

The enzyme catalyses ssDNA + n NTP = ssDNA/pppN(pN)n-1 hybrid + (n-1) diphosphate.. RNA polymerase that catalyzes the synthesis of short RNA molecules used as primers for DNA polymerase during DNA replication. This chain is DNA primase DnaG, found in Methanosphaerula palustris (strain ATCC BAA-1556 / DSM 19958 / E1-9c).